Consider the following 363-residue polypeptide: Protein RecA (363 aa).

Residue 66–73 (GPESSGKT) coordinates ATP. Residues 327–363 (YGIDEKSIADRENPEKIKEKREETSEENKTDNSEKTK) are disordered. Basic and acidic residues predominate over residues 329-363 (IDEKSIADRENPEKIKEKREETSEENKTDNSEKTK).

This sequence belongs to the RecA family.

The protein localises to the cytoplasm. Functionally, can catalyze the hydrolysis of ATP in the presence of single-stranded DNA, the ATP-dependent uptake of single-stranded DNA by duplex DNA, and the ATP-dependent hybridization of homologous single-stranded DNAs. It interacts with LexA causing its activation and leading to its autocatalytic cleavage. The chain is Protein RecA from Lactobacillus acidophilus (strain ATCC 700396 / NCK56 / N2 / NCFM).